A 181-amino-acid chain; its full sequence is MTGEHVILLDEQGNPDGILEKYAAHTSDTLLHLAFSCWLFNAQGQLLVTRRSLSKKAWPGVWTNSVCGHPQQGESTEAAIIRRSRFELGVEITNLTPVYPDFRYRATDPNGIVENEVCPVYAAQVTSALQVNPDEVMDYQWSGLETVLQALSAAPWAFSPWMVLQASDDKARELLREYNQG.

2 residues coordinate Mn(2+): histidine 25 and histidine 32. The Nudix hydrolase domain maps to 30–164 (LLHLAFSCWL…PWAFSPWMVL (135 aa)). Cysteine 67 is a catalytic residue. Histidine 69 lines the Mn(2+) pocket. Mg(2+) is bound at residue glutamate 87. Residues glutamate 114 and glutamate 116 each contribute to the Mn(2+) site. Residue glutamate 116 is part of the active site.

The protein belongs to the IPP isomerase type 1 family. As to quaternary structure, homodimer. The cofactor is Mg(2+). Mn(2+) is required as a cofactor.

The protein localises to the cytoplasm. It catalyses the reaction isopentenyl diphosphate = dimethylallyl diphosphate. The protein operates within isoprenoid biosynthesis; dimethylallyl diphosphate biosynthesis; dimethylallyl diphosphate from isopentenyl diphosphate: step 1/1. In terms of biological role, catalyzes the 1,3-allylic rearrangement of the homoallylic substrate isopentenyl (IPP) to its highly electrophilic allylic isomer, dimethylallyl diphosphate (DMAPP). This Citrobacter koseri (strain ATCC BAA-895 / CDC 4225-83 / SGSC4696) protein is Isopentenyl-diphosphate Delta-isomerase.